A 208-amino-acid chain; its full sequence is Glutathione S-transferase GstB (208 aa).

In terms of domain architecture, GST N-terminal spans 1-83 (MITLWGRNNS…YLAAQYGQKR (83 aa)). Glutathione contacts are provided by residues Asn-12, Asn-39, Val-53, and 67 to 68 (ES). The 121-residue stretch at 88–208 (SPARRAEAEK…VRKVVMIPVS (121 aa)) folds into the GST C-terminal domain.

It belongs to the GST superfamily.

It carries out the reaction RX + glutathione = an S-substituted glutathione + a halide anion + H(+). Conjugation of reduced glutathione to a wide number of exogenous and endogenous hydrophobic electrophiles. This chain is Glutathione S-transferase GstB (gstB), found in Escherichia coli O6:H1 (strain CFT073 / ATCC 700928 / UPEC).